The sequence spans 1367 residues: Mediator of RNA polymerase II transcription subunit 23 (1367 aa).

Residues 1343–1367 (PPQALSSGSPAPQANQVPTALPVTQ) are disordered. Residues 1346–1367 (ALSSGSPAPQANQVPTALPVTQ) show a composition bias toward polar residues.

This sequence belongs to the Mediator complex subunit 23 family. As to quaternary structure, component of the Mediator complex, which is composed of MED1, MED4, MED6, MED7, MED8, MED9, MED10, MED11, MED12, MED13, MED13L, MED14, MED15, MED16, MED17, MED18, MED19, MED20, MED21, MED22, MED23, MED24, MED25, MED26, MED27, MED29, MED30, MED31, CCNC, CDK8 and CDC2L6/CDK11. The MED12, MED13, CCNC and CDK8 subunits form a distinct module termed the CDK8 module. Mediator containing the CDK8 module is less active than Mediator lacking this module in supporting transcriptional activation. Individual preparations of the Mediator complex lacking one or more distinct subunits have been variously termed ARC, CRSP, DRIP, PC2, SMCC and TRAP. Interacts with CDK8, CEBPB, CTNNB1, ELK1 and GLI3. Interacts with the adenovirus E1A protein.

The protein resides in the nucleus. Component of the Mediator complex, a coactivator involved in the regulated transcription of nearly all RNA polymerase II-dependent genes. Mediator functions as a bridge to convey information from gene-specific regulatory proteins to the basal RNA polymerase II transcription machinery. Mediator is recruited to promoters by direct interactions with regulatory proteins and serves as a scaffold for the assembly of a functional pre-initiation complex with RNA polymerase II and the general transcription factors. Also required for transcriptional activation subsequent to the assembly of the pre-initiation complex. Required for transcriptional activation by adenovirus E1A protein. Required for ELK1-dependent transcriptional activation in response to activated Ras signaling. The chain is Mediator of RNA polymerase II transcription subunit 23 (Med23) from Rattus norvegicus (Rat).